Consider the following 397-residue polypeptide: Tryptophan synthase beta chain (397 aa).

The residue at position 87 (Lys87) is an N6-(pyridoxal phosphate)lysine.

This sequence belongs to the TrpB family. In terms of assembly, tetramer of two alpha and two beta chains. Pyridoxal 5'-phosphate serves as cofactor.

It catalyses the reaction (1S,2R)-1-C-(indol-3-yl)glycerol 3-phosphate + L-serine = D-glyceraldehyde 3-phosphate + L-tryptophan + H2O. It participates in amino-acid biosynthesis; L-tryptophan biosynthesis; L-tryptophan from chorismate: step 5/5. Its function is as follows. The beta subunit is responsible for the synthesis of L-tryptophan from indole and L-serine. The protein is Tryptophan synthase beta chain of Escherichia coli O157:H7.